Reading from the N-terminus, the 1101-residue chain is ATP-dependent DNA helicase mph1 (1101 aa).

4 disordered regions span residues 22-59 (PGTSDTVESVQTNNRPAKQSDISISQGNEEDEFQSPDR), 95-138 (LTQP…QYHD), 154-231 (FEEE…TNRP), and 250-270 (SSQRGEQIFSPPEKSEPPTHH). Positions 24–48 (TSDTVESVQTNNRPAKQSDISISQG) are enriched in polar residues. Low complexity predominate over residues 170 to 190 (TPARTAAAPCAAPKGTAADVP). Acidic residues predominate over residues 191–202 (FDLDDIPDDAFD). Over residues 209 to 228 (PPRSTSQATRGPPVQSQFRT) the composition is skewed to polar residues. The region spanning 296 to 464 (IAQRGLFHNL…AIIDDLGIAK (169 aa)) is the Helicase ATP-binding domain. 309-316 (LPTGLGKT) is an ATP binding site. The DEAH box motif lies at 412-415 (DEAH). The Helicase C-terminal domain occupies 634-808 (YLKQVVLNHF…GTRFTFHDDK (175 aa)). Disordered stretches follow at residues 824-890 (RQID…PTPE) and 991-1067 (SRDP…QDAF). The segment covering 842–854 (RRARPPKRPPKKF) has biased composition (basic residues).

This sequence belongs to the DEAD box helicase family. DEAH subfamily. FANCM sub-subfamily. Interacts with the MHF histone-fold complex to form the FANCM-MHF complex.

Its subcellular location is the nucleus. It carries out the reaction ATP + H2O = ADP + phosphate + H(+). Functionally, ATP-dependent DNA helicase involved in DNA damage repair by homologous recombination and in genome maintenance. Capable of unwinding D-loops. Plays a role in limiting crossover recombinants during mitotic DNA double-strand break (DSB) repair. Component of a FANCM-MHF complex which promotes gene conversion at blocked replication forks, probably by reversal of the stalled fork. This chain is ATP-dependent DNA helicase mph1, found in Aspergillus fumigatus (strain CBS 144.89 / FGSC A1163 / CEA10) (Neosartorya fumigata).